Here is a 389-residue protein sequence, read N- to C-terminus: Indole-3-acetate monooxygenase (389 aa).

The protein belongs to the HpaH/HsaA monooxygenase family.

It carries out the reaction (indol-3-yl)acetate + NADH + O2 + H(+) = 2-hydroxy-(1H-indol-3-yl)acetate + NAD(+) + H2O. The enzyme catalyses indole + NADH + O2 + H(+) = indoxyl + NAD(+) + H2O. Its function is as follows. Involved in the degradation of the plant hormone indole-3-acetic acid (IAA). Catalyzes the first step of the pathway, the conversion of IAA to 2-hydroxy-IAA (2-OH-IAA). Can also convert indole to indoxyl, which spontaneously dimerizes in the presence of oxygen to form the blue pigment indigo. The sequence is that of Indole-3-acetate monooxygenase from Acinetobacter baumannii (strain ATCC 19606 / DSM 30007 / JCM 6841 / CCUG 19606 / CIP 70.34 / NBRC 109757 / NCIMB 12457 / NCTC 12156 / 81).